Reading from the N-terminus, the 106-residue chain is Small ribosomal subunit protein uS10 (106 aa).

Belongs to the universal ribosomal protein uS10 family. In terms of assembly, part of the 30S ribosomal subunit.

Its function is as follows. Involved in the binding of tRNA to the ribosomes. This chain is Small ribosomal subunit protein uS10, found in Archaeoglobus fulgidus (strain ATCC 49558 / DSM 4304 / JCM 9628 / NBRC 100126 / VC-16).